Reading from the N-terminus, the 519-residue chain is uncharacterized protein (519 aa).

Belongs to the glycogen phosphorylase family.

This is an uncharacterized protein from Methanocaldococcus jannaschii (strain ATCC 43067 / DSM 2661 / JAL-1 / JCM 10045 / NBRC 100440) (Methanococcus jannaschii).